The primary structure comprises 257 residues: DNA repair protein RecO (257 aa).

It belongs to the RecO family.

Functionally, involved in DNA repair and RecF pathway recombination. The polypeptide is DNA repair protein RecO (Clostridium kluyveri (strain ATCC 8527 / DSM 555 / NBRC 12016 / NCIMB 10680 / K1)).